The primary structure comprises 216 residues: Phosducin-like protein 3 (216 aa).

Residues 13 to 59 are a coiled coil; the sequence is AKTIEQQLDQQLDRLDNLDSDDLKVLREQRLREMKDLNNKKQEWLRN. One can recognise a Phosducin domain in the interval 29 to 163; it reads NLDSDDLKVL…DLGNCDDFAT (135 aa).

Belongs to the phosducin family. As to expression, highly expressed in germline cells of the testis from the spermatogonia stage until the early spermatid stage but is no longer observed in late-stage spermatids in the distal end of the testis.

It catalyses the reaction [thioredoxin]-dithiol + NADP(+) = [thioredoxin]-disulfide + NADPH + H(+). Its function is as follows. Has redox activity with thioredoxin. Required for male fertility and maturation of sperm past the canoe stage during spermiogenesis. The chain is Phosducin-like protein 3 from Drosophila melanogaster (Fruit fly).